Consider the following 431-residue polypeptide: Enolase (431 aa).

Gln-162 is a binding site for (2R)-2-phosphoglycerate. Glu-204 acts as the Proton donor in catalysis. Mg(2+) is bound by residues Asp-241, Glu-288, and Asp-315. (2R)-2-phosphoglycerate is bound by residues Lys-340, Arg-369, Ser-370, and Lys-391. Lys-340 functions as the Proton acceptor in the catalytic mechanism.

The protein belongs to the enolase family. Mg(2+) serves as cofactor.

It is found in the cytoplasm. Its subcellular location is the secreted. It localises to the cell surface. The catalysed reaction is (2R)-2-phosphoglycerate = phosphoenolpyruvate + H2O. The protein operates within carbohydrate degradation; glycolysis; pyruvate from D-glyceraldehyde 3-phosphate: step 4/5. Catalyzes the reversible conversion of 2-phosphoglycerate (2-PG) into phosphoenolpyruvate (PEP). It is essential for the degradation of carbohydrates via glycolysis. This chain is Enolase, found in Phocaeicola vulgatus (strain ATCC 8482 / DSM 1447 / JCM 5826 / CCUG 4940 / NBRC 14291 / NCTC 11154) (Bacteroides vulgatus).